Consider the following 89-residue polypeptide: Small ribosomal subunit protein uS15 (89 aa).

The protein belongs to the universal ribosomal protein uS15 family. As to quaternary structure, part of the 30S ribosomal subunit. Forms a bridge to the 50S subunit in the 70S ribosome, contacting the 23S rRNA.

Its function is as follows. One of the primary rRNA binding proteins, it binds directly to 16S rRNA where it helps nucleate assembly of the platform of the 30S subunit by binding and bridging several RNA helices of the 16S rRNA. In terms of biological role, forms an intersubunit bridge (bridge B4) with the 23S rRNA of the 50S subunit in the ribosome. This Shewanella frigidimarina (strain NCIMB 400) protein is Small ribosomal subunit protein uS15.